The chain runs to 488 residues: Prostaglandin E2 receptor EP4 subtype (488 aa).

Over 1–19 (MSTPVANASASSMPELLNN) the chain is Extracellular. Residue Asn7 is glycosylated (N-linked (GlcNAc...) asparagine). A helical transmembrane segment spans residues 20–43 (PVTIPAVMFIFGVVGNLVAIVVLC). The Cytoplasmic portion of the chain corresponds to 44-55 (KSRKEQKETTFY). A helical membrane pass occupies residues 56 to 79 (TLVCGLAVTDLLGTLLVSPVTIAT). Over 80-96 (YMKGQWPGGQALCDYST) the chain is Extracellular. Cys92 and Cys170 are oxidised to a cystine. A helical membrane pass occupies residues 97-115 (FILLFFGLSGLSIICAMSI). Residues 116-135 (ERYLAINHAYFYSHYVDKRL) lie on the Cytoplasmic side of the membrane. The chain crosses the membrane as a helical span at residues 136 to 160 (AGLTLFAVYASNVLFCALPNMGLGR). Residues 161 to 184 (SRLQFPDTWCFIDWRTNVTAHAAF) are Extracellular-facing. N-linked (GlcNAc...) asparagine glycosylation is present at Asn177. A helical membrane pass occupies residues 185–211 (SYMYAGFSSFLILATVLCNVLVCGALL). At 212-270 (RMHRQFMRRTSLGTEQHHAAAAAAVTSAACRGHPTASPALPRLSDFRRRRSFRRIAGAE) the chain is on the cytoplasmic side. The chain crosses the membrane as a helical span at residues 271 to 298 (IQMVILLIATSLVVLICSIPLVVRVFIN). The Extracellular segment spans residues 299–315 (QLYQPDLVREISQNPDL). A helical membrane pass occupies residues 316–335 (QAIRIASVNPILDPWIYILL). At 336 to 488 (RKTVLSKAIE…ETLNLSEKCI (153 aa)) the chain is on the cytoplasmic side. Residues 358-371 (RRDRSGQHCSDSRR) show a composition bias toward basic and acidic residues. The interval 358 to 381 (RRDRSGQHCSDSRRTSSAMSTHSR) is disordered. Residues 372–381 (TSSAMSTHSR) are compositionally biased toward polar residues. Ser377, Ser380, Ser382, and Ser385 each carry phosphoserine. A disordered region spans residues 456 to 475 (EVGGGGRAGPTPKGSSLQVT).

It belongs to the G-protein coupled receptor 1 family. As to quaternary structure, interacts with FEM1A. Post-translationally, phosphorylation mediates agonist-mediated desensitization by promoting cytoplasmic retention. As to expression, highly expressed in intestine, duodenal epithelium, uterus, thymus and adrenal cortex. Lower but significant expression in whole adrenal, lung, spleen, stomach, and kidney. In this latter organ, the receptor is localized in the glomeruli and the transitional epithelium of the renal calyx.

It localises to the cell membrane. Receptor for prostaglandin E2 (PGE2). The activity of this receptor is mediated by G(s) proteins that stimulate adenylate cyclase. Has a relaxing effect on smooth muscle. May play an important role in regulating renal hemodynamics, intestinal epithelial transport, adrenal aldosterone secretion, and uterine function. In Oryctolagus cuniculus (Rabbit), this protein is Prostaglandin E2 receptor EP4 subtype (PTGER4).